Reading from the N-terminus, the 369-residue chain is RAB6-interacting golgin (369 aa).

The segment at 1–128 (MAQGWAGFSE…HNNVEILPPK (128 aa)) is disordered. The segment covering 11–27 (EELRRLKQTKDPFEPQR) has biased composition (basic and acidic residues). 2 stretches are compositionally biased toward polar residues: residues 46–61 (EQSQKLGLQDGSTSLL) and 82–93 (SPTLPSHFTLTS). A compositionally biased stretch (basic and acidic residues) spans 106–120 (QPKELGLENSHDGHN). A coiled-coil region spans residues 145-297 (RWEVLQQEQR…EVERLLHEQE (153 aa)). Residues 188–369 (IQKELQALDD…GNDISAALAT (182 aa)) are necessary for interaction with RCHY1. Positions 334 to 369 (VSPKVDDQCGNSSSIPFLSPNCPNQEGNDISAALAT) are disordered. Residues 342–361 (CGNSSSIPFLSPNCPNQEGN) show a composition bias toward polar residues.

Belongs to the GORAB family. In terms of assembly, interacts with SCYL1. Interacts with RCHY1 and RAB6A/RAB6.

It localises to the cytoplasm. The protein resides in the golgi apparatus. This is RAB6-interacting golgin (GORAB) from Homo sapiens (Human).